The sequence spans 341 residues: Ketol-acid reductoisomerase (NADP(+)) (341 aa).

One can recognise a KARI N-terminal Rossmann domain in the interval 2 to 181 (AKVYYNGDVN…GAARAGVLET (180 aa)). NADP(+)-binding positions include 25-28 (YGSQ), Arg-48, Ser-52, and 82-85 (DEHQ). His-107 is an active-site residue. Gly-133 serves as a coordination point for NADP(+). The region spanning 182-327 (TFKEETETDL…RELREMMPFV (146 aa)) is the KARI C-terminal knotted domain. Mg(2+) contacts are provided by Asp-190, Glu-194, Glu-226, and Glu-230. Ser-251 provides a ligand contact to substrate.

This sequence belongs to the ketol-acid reductoisomerase family. The cofactor is Mg(2+).

It catalyses the reaction (2R)-2,3-dihydroxy-3-methylbutanoate + NADP(+) = (2S)-2-acetolactate + NADPH + H(+). It carries out the reaction (2R,3R)-2,3-dihydroxy-3-methylpentanoate + NADP(+) = (S)-2-ethyl-2-hydroxy-3-oxobutanoate + NADPH + H(+). It participates in amino-acid biosynthesis; L-isoleucine biosynthesis; L-isoleucine from 2-oxobutanoate: step 2/4. It functions in the pathway amino-acid biosynthesis; L-valine biosynthesis; L-valine from pyruvate: step 2/4. Involved in the biosynthesis of branched-chain amino acids (BCAA). Catalyzes an alkyl-migration followed by a ketol-acid reduction of (S)-2-acetolactate (S2AL) to yield (R)-2,3-dihydroxy-isovalerate. In the isomerase reaction, S2AL is rearranged via a Mg-dependent methyl migration to produce 3-hydroxy-3-methyl-2-ketobutyrate (HMKB). In the reductase reaction, this 2-ketoacid undergoes a metal-dependent reduction by NADPH to yield (R)-2,3-dihydroxy-isovalerate. This Shouchella clausii (strain KSM-K16) (Alkalihalobacillus clausii) protein is Ketol-acid reductoisomerase (NADP(+)).